A 209-amino-acid chain; its full sequence is Uracil phosphoribosyltransferase (209 aa).

5-phospho-alpha-D-ribose 1-diphosphate contacts are provided by residues arginine 77, arginine 102, and 129–137 (DPMLATGSS). Residues isoleucine 192 and 197-199 (GDA) contribute to the uracil site. A 5-phospho-alpha-D-ribose 1-diphosphate-binding site is contributed by aspartate 198.

Belongs to the UPRTase family. Mg(2+) is required as a cofactor.

It catalyses the reaction UMP + diphosphate = 5-phospho-alpha-D-ribose 1-diphosphate + uracil. The protein operates within pyrimidine metabolism; UMP biosynthesis via salvage pathway; UMP from uracil: step 1/1. With respect to regulation, allosterically activated by GTP. In terms of biological role, catalyzes the conversion of uracil and 5-phospho-alpha-D-ribose 1-diphosphate (PRPP) to UMP and diphosphate. This chain is Uracil phosphoribosyltransferase, found in Metamycoplasma hominis (Mycoplasma hominis).